The chain runs to 500 residues: Glycerol kinase (500 aa).

Thr12 provides a ligand contact to ADP. ATP-binding residues include Thr12, Thr13, and Ser14. Thr12 is a sn-glycerol 3-phosphate binding site. Arg16 contacts ADP. Residues Arg82, Glu83, Tyr134, and Asp243 each coordinate sn-glycerol 3-phosphate. Glycerol-binding residues include Arg82, Glu83, Tyr134, Asp243, and Gln244. Residues Thr265 and Gly308 each coordinate ADP. Residues Thr265, Gly308, Gln312, and Gly411 each contribute to the ATP site. Gly411 is a binding site for ADP.

The protein belongs to the FGGY kinase family.

It carries out the reaction glycerol + ATP = sn-glycerol 3-phosphate + ADP + H(+). Its pathway is polyol metabolism; glycerol degradation via glycerol kinase pathway; sn-glycerol 3-phosphate from glycerol: step 1/1. Its activity is regulated as follows. Inhibited by fructose 1,6-bisphosphate (FBP). Its function is as follows. Key enzyme in the regulation of glycerol uptake and metabolism. Catalyzes the phosphorylation of glycerol to yield sn-glycerol 3-phosphate. This is Glycerol kinase from Chelativorans sp. (strain BNC1).